The following is a 490-amino-acid chain: Probable cytosol aminopeptidase (490 aa).

Residues Lys-262 and Asp-267 each coordinate Mn(2+). Residue Lys-274 is part of the active site. Positions 285, 344, and 346 each coordinate Mn(2+). Arg-348 is an active-site residue.

This sequence belongs to the peptidase M17 family. Mn(2+) is required as a cofactor.

Its subcellular location is the cytoplasm. The enzyme catalyses Release of an N-terminal amino acid, Xaa-|-Yaa-, in which Xaa is preferably Leu, but may be other amino acids including Pro although not Arg or Lys, and Yaa may be Pro. Amino acid amides and methyl esters are also readily hydrolyzed, but rates on arylamides are exceedingly low.. The catalysed reaction is Release of an N-terminal amino acid, preferentially leucine, but not glutamic or aspartic acids.. In terms of biological role, presumably involved in the processing and regular turnover of intracellular proteins. Catalyzes the removal of unsubstituted N-terminal amino acids from various peptides. The chain is Probable cytosol aminopeptidase from Mannheimia succiniciproducens (strain KCTC 0769BP / MBEL55E).